A 539-amino-acid chain; its full sequence is CTP synthase (539 aa).

Residues 1-268 (MADTKYIFVT…DETVLRKVGL (268 aa)) are amidoligase domain. Serine 15 contacts CTP. Residue serine 15 participates in UTP binding. Residue 16–21 (SLGKGI) coordinates ATP. Tyrosine 56 lines the L-glutamine pocket. Residue aspartate 73 coordinates ATP. Mg(2+) contacts are provided by aspartate 73 and glutamate 143. CTP contacts are provided by residues 150-152 (DIE), 189-194 (KTKPTQ), and lysine 225. UTP-binding positions include 189 to 194 (KTKPTQ) and lysine 225. The 243-residue stretch at 294–536 (TIALVGKYVE…IREAIKTRKK (243 aa)) folds into the Glutamine amidotransferase type-1 domain. Residue glycine 356 participates in L-glutamine binding. Cysteine 383 acts as the Nucleophile; for glutamine hydrolysis in catalysis. Residues 384-387 (LGMQ), glutamate 407, and arginine 464 contribute to the L-glutamine site. Catalysis depends on residues histidine 509 and glutamate 511.

This sequence belongs to the CTP synthase family. In terms of assembly, homotetramer.

The enzyme catalyses UTP + L-glutamine + ATP + H2O = CTP + L-glutamate + ADP + phosphate + 2 H(+). It catalyses the reaction L-glutamine + H2O = L-glutamate + NH4(+). The catalysed reaction is UTP + NH4(+) + ATP = CTP + ADP + phosphate + 2 H(+). The protein operates within pyrimidine metabolism; CTP biosynthesis via de novo pathway; CTP from UDP: step 2/2. Allosterically activated by GTP, when glutamine is the substrate; GTP has no effect on the reaction when ammonia is the substrate. The allosteric effector GTP functions by stabilizing the protein conformation that binds the tetrahedral intermediate(s) formed during glutamine hydrolysis. Inhibited by the product CTP, via allosteric rather than competitive inhibition. In terms of biological role, catalyzes the ATP-dependent amination of UTP to CTP with either L-glutamine or ammonia as the source of nitrogen. Regulates intracellular CTP levels through interactions with the four ribonucleotide triphosphates. This is CTP synthase from Porphyromonas gingivalis (strain ATCC BAA-308 / W83).